A 509-amino-acid chain; its full sequence is Cardiolipin synthase 1 (509 aa).

3 helical membrane passes run 4–24, 30–50, and 59–79; these read PIIQLLLIFTIVSIVPFLLNT, YTFVGVLWSITIVGISFVIFI, and LAWFLVLALLPVVGVLLYSIF. 2 PLD phosphodiesterase domains span residues 238 to 265 and 422 to 449; these read VNYRNHRKIVIVDGEIGFTGGLNVGDEY and KDGFMHAKILLVDDKIATIGTANMDVRS. Residues H243, K245, D250, H427, K429, and D434 contribute to the active site.

Belongs to the phospholipase D family. Cardiolipin synthase subfamily.

The protein localises to the cell membrane. The catalysed reaction is 2 a 1,2-diacyl-sn-glycero-3-phospho-(1'-sn-glycerol) = a cardiolipin + glycerol. Functionally, catalyzes the reversible phosphatidyl group transfer from one phosphatidylglycerol molecule to another to form cardiolipin (CL) (diphosphatidylglycerol) and glycerol. This is Cardiolipin synthase 1 (cls1) from Bacillus anthracis.